The sequence spans 274 residues: Large ribosomal subunit protein uL2cz/uL2cy (274 aa).

Disordered regions lie at residues 1-22 (MAIH…DSQV) and 223-274 (MNPV…RRTK).

This sequence belongs to the universal ribosomal protein uL2 family. In terms of assembly, part of the 50S ribosomal subunit.

Its subcellular location is the plastid. The protein localises to the chloroplast. The sequence is that of Large ribosomal subunit protein uL2cz/uL2cy (rpl2-A) from Phaseolus vulgaris (Kidney bean).